Reading from the N-terminus, the 90-residue chain is Translation initiation factor IF-1 (90 aa).

The 76-residue stretch at 15–90 folds into the S1-like domain; it reads KKQKRKKEEV…TLGRIVFRHK (76 aa).

The protein belongs to the IF-1 family. As to quaternary structure, component of the 30S ribosomal translation pre-initiation complex which assembles on the 30S ribosome in the order IF-2 and IF-3, IF-1 and N-formylmethionyl-tRNA(fMet); mRNA recruitment can occur at any time during PIC assembly.

The protein localises to the cytoplasm. Its function is as follows. One of the essential components for the initiation of protein synthesis. Stabilizes the binding of IF-2 and IF-3 on the 30S subunit to which N-formylmethionyl-tRNA(fMet) subsequently binds. Helps modulate mRNA selection, yielding the 30S pre-initiation complex (PIC). Upon addition of the 50S ribosomal subunit IF-1, IF-2 and IF-3 are released leaving the mature 70S translation initiation complex. This Mycoplasma sp protein is Translation initiation factor IF-1.